Reading from the N-terminus, the 220-residue chain is UPF0758 protein ASA_4229 (220 aa).

In terms of domain architecture, MPN spans 95–220 (EQLQRGDALT…TVSFAERGWL (126 aa)). His-169, His-171, and Asp-182 together coordinate Zn(2+). The short motif at 169-182 (HNHPSGVAEPSRAD) is the JAMM motif element.

Belongs to the UPF0758 family.

This Aeromonas salmonicida (strain A449) protein is UPF0758 protein ASA_4229.